The following is a 552-amino-acid chain: MTLDSYNIFNDEYLFNMPLSPLPKVLGSFETVQSVLTLTTPTLTPTTTRNIEDTIGHLLSDTQPDRGAGCAGFAVPKVLPNAMGAIEALGMGIPSGVNSLPIQPAYDVNLAQGSDSEDSNASYNDTQMNEEQDTTDTSSAHTDSTSYQAGQIMAGSVNGGGVNNFTNVLAAVSSTRGAASVGSSNANTSNTPARRGGGRRPNRSTNMTPEEEQKRAVRRERNKQAAARCRKRRVDQTNELTEEVEQLEKRGDSMRKEIEALTMSKNQLEYCLAAHRPTCQKIRSDMLSVTTCNGLIAPAGLLSAGSSGSGASSHHNHNSNDSSNGTITGMDATLNSTGRSNSPLDLKPAANIDSLLLQHIKDEPLDGAIDSGSSLDQDGPPPSKRITLPPMSTMPHVHMSTLMTPTGASSGSLQTPITSTAPVGFGSAFPVTTNGSSINTINSISQNNMNSPTLNALNKVPKERPNTLAFQRPVGHMHLTLANNNKPGGPTQIQGVPIQTPSTGTFNFDSLMDGGTGLTPVSGPLVPNSSSANKHPLELPTPTAEPSKLVSL.

Disordered stretches follow at residues 110-145 and 177-234; these read LAQG…TDST and GAAS…KRRV. The segment covering 111-127 has biased composition (polar residues); sequence AQGSDSEDSNASYNDTQ. The segment covering 135–145 has biased composition (low complexity); the sequence is TDTSSAHTDST. Over residues 177-192 the composition is skewed to polar residues; the sequence is GAASVGSSNANTSNTP. In terms of domain architecture, bZIP spans 212–275; sequence EQKRAVRRER…NQLEYCLAAH (64 aa). The interval 214-233 is basic motif; that stretch reads KRAVRRERNKQAAARCRKRR. Positions 240-247 are leucine-zipper; sequence LTEEVEQL. A compositionally biased stretch (low complexity) spans 304-325; the sequence is AGSSGSGASSHHNHNSNDSSNG. Disordered stretches follow at residues 304–346, 365–390, and 514–552; these read AGSS…PLDL, LDGA…TLPP, and GGTG…LVSL. Over residues 333–343 the composition is skewed to polar residues; sequence TLNSTGRSNSP. At Ser342 the chain carries Phosphoserine.

The protein belongs to the bZIP family. Fos subfamily. In terms of assembly, homodimer. Heterodimer with Jra. The kay-Jra heterodimer binds more stably to the AP-1 site than either of the two proteins alone.

It localises to the nucleus. Functionally, developmentally regulated transcription factor AP-1 binds and recognizes the enhancer DNA sequence: 5'-TGA[CG]TCA-3'. May play a role in the function or determination of a particular subset of cells in the developing embryo. It is able to carry out its function either independently of or in conjunction with Jra. This is Transcription factor kayak from Drosophila yakuba (Fruit fly).